We begin with the raw amino-acid sequence, 180 residues long: MSLDKTTIAKRYSKALFEIVSEKGQRDETRAELNQIQQVFNDNEGLGKILTDKGLEQNQKLEILNILTKDASNYVGNLIKMTFDYGRMDYLTAIIDEFNNLCDADEKIVRAKVVSAIPLSDQQLDKMAEQFAKRLKVSEVVLDSEVDDSIIGGAIIKTDSLIYDGSIQTQINQIRQRLIG.

This sequence belongs to the ATPase delta chain family. In terms of assembly, F-type ATPases have 2 components, F(1) - the catalytic core - and F(0) - the membrane proton channel. F(1) has five subunits: alpha(3), beta(3), gamma(1), delta(1), epsilon(1). F(0) has three main subunits: a(1), b(2) and c(10-14). The alpha and beta chains form an alternating ring which encloses part of the gamma chain. F(1) is attached to F(0) by a central stalk formed by the gamma and epsilon chains, while a peripheral stalk is formed by the delta and b chains.

It localises to the cell membrane. Its function is as follows. F(1)F(0) ATP synthase produces ATP from ADP in the presence of a proton or sodium gradient. F-type ATPases consist of two structural domains, F(1) containing the extramembraneous catalytic core and F(0) containing the membrane proton channel, linked together by a central stalk and a peripheral stalk. During catalysis, ATP synthesis in the catalytic domain of F(1) is coupled via a rotary mechanism of the central stalk subunits to proton translocation. In terms of biological role, this protein is part of the stalk that links CF(0) to CF(1). It either transmits conformational changes from CF(0) to CF(1) or is implicated in proton conduction. This is ATP synthase subunit delta from Pediococcus pentosaceus (strain ATCC 25745 / CCUG 21536 / LMG 10740 / 183-1w).